Reading from the N-terminus, the 239-residue chain is MSAPLSVFVTGTDTEIGKTFVSAAMLHGFARHGLRAAALKPIAAGAYERDGVWRNEDADQLDAAANVALPPELRTPFLLKAPAAPHIVAAQEGVTLDLDTIVACHREALTRADVVVVEGVGGFRVPLNDTQDTADLAVALGLPVVLVVGVRLGCISHALLTADAIRQRGLTLAGWVANHVDPAMSFADENVATIRDWLARERRAPLIGRIAHMTPAAPESAAAMLDIAALVESLRTARH.

Residue 15-20 (EIGKTF) coordinates ATP. Mg(2+) is bound at residue T19. The active site involves K40. ATP is bound by residues D57, 118–121 (EGVG), and 178–179 (NH). Positions 57 and 118 each coordinate Mg(2+).

The protein belongs to the dethiobiotin synthetase family. Homodimer. Requires Mg(2+) as cofactor.

The protein localises to the cytoplasm. It carries out the reaction (7R,8S)-7,8-diammoniononanoate + CO2 + ATP = (4R,5S)-dethiobiotin + ADP + phosphate + 3 H(+). The protein operates within cofactor biosynthesis; biotin biosynthesis; biotin from 7,8-diaminononanoate: step 1/2. Catalyzes a mechanistically unusual reaction, the ATP-dependent insertion of CO2 between the N7 and N8 nitrogen atoms of 7,8-diaminopelargonic acid (DAPA, also called 7,8-diammoniononanoate) to form a ureido ring. The chain is ATP-dependent dethiobiotin synthetase BioD from Burkholderia orbicola (strain MC0-3).